We begin with the raw amino-acid sequence, 105 residues long: MTVSCSKVLLSLCLFLILLEATHESNQQRTNYREFSEIQLAQETREINEKNNQLLNQQLPRLNRRKRLWRDEDRRTFCTTLCPCEDRRKRAAVTPPTRKVPCCCP.

An N-terminal signal peptide occupies residues 1 to 21 (MTVSCSKVLLSLCLFLILLEA).

It belongs to the scolopendra neurotoxin 10 family. In terms of processing, contains 3 disulfide bonds. Expressed by the venom gland.

The protein resides in the secreted. The chain is Putative neurotoxin 10 from Scolopendra mutilans (Chinese red-headed centipede).